The primary structure comprises 194 residues: MGRLLPKSFYYRQPDVVARELLGKILVSCASGACMRCMVTEAEAYFGECDPASRARRGRGRIWRALYGEPGRALVYGMHRQWLLNIVAHSEGMAGAVLLRSCQPLEPPRLDPPPIGPGRLARALSIDRGVDGAPVYERGSPLTLWENPEAVEGFRVACSGRVGVSEDLELPLRFYIAGNPFVSKARVSPAPKHC.

Belongs to the DNA glycosylase MPG family.

This Aeropyrum pernix (strain ATCC 700893 / DSM 11879 / JCM 9820 / NBRC 100138 / K1) protein is Putative 3-methyladenine DNA glycosylase.